The chain runs to 140 residues: Large ribosomal subunit protein uL15 (140 aa).

The tract at residues 1–31 (MDTKKFRGSRTCGGGTHKNRRGAGNRGGRGK) is disordered.

The protein belongs to the universal ribosomal protein uL15 family. In terms of assembly, part of the 50S ribosomal subunit.

In terms of biological role, binds to the 23S rRNA. In Methanosarcina barkeri (strain Fusaro / DSM 804), this protein is Large ribosomal subunit protein uL15.